The primary structure comprises 182 residues: Methionine-R-sulfoxide reductase B2, mitochondrial (182 aa).

The transit peptide at 1–20 directs the protein to the mitochondrion; that stretch reads MARLLWLLRGLTLGTAPRRA. Positions 51 to 180 constitute a MsrB domain; sequence KSEWQKKLTP…NSVALKFKPR (130 aa). Residues Cys90, Cys93, Cys146, and Cys149 each contribute to the Zn(2+) site. Cys169 (nucleophile) is an active-site residue.

Belongs to the MsrB Met sulfoxide reductase family. In terms of assembly, interacts with DAOA; the interaction is direct. Zn(2+) is required as a cofactor. As to expression, ubiquitous. Detected in retina, ocular ciliary body, skeletal muscle, heart, colon, bone marrow, cerebellum, small intestine, fetal brain, fetal liver, kidney, spinal cord, lung, placenta and prostate.

It localises to the mitochondrion. The catalysed reaction is L-methionyl-[protein] + [thioredoxin]-disulfide + H2O = L-methionyl-(R)-S-oxide-[protein] + [thioredoxin]-dithiol. The enzyme catalyses [thioredoxin]-disulfide + L-methionine + H2O = L-methionine (R)-S-oxide + [thioredoxin]-dithiol. Its function is as follows. Methionine-sulfoxide reductase that specifically reduces methionine (R)-sulfoxide back to methionine. While in many cases, methionine oxidation is the result of random oxidation following oxidative stress, methionine oxidation is also a post-translational modification that takes place on specific residue. Upon oxidative stress, may play a role in the preservation of mitochondrial integrity by decreasing the intracellular reactive oxygen species build-up through its scavenging role, hence contributing to cell survival and protein maintenance. The protein is Methionine-R-sulfoxide reductase B2, mitochondrial (MSRB2) of Homo sapiens (Human).